The primary structure comprises 1536 residues: Ferredoxin-dependent glutamate synthase (1536 aa).

Catalysis depends on cysteine 27, which acts as the For GATase activity. A Glutamine amidotransferase type-2 domain is found at 27 to 427; the sequence is CGVGFIANLN…PGQMLCVDLS (401 aa). 1105 to 1162 contributes to the FMN binding site; that stretch reads LAEVHTTLVENSLREKVILRVDGGLRTGKDIIIAALMGAEEFGFGTVAMIATGCVMAR. 3 residues coordinate [3Fe-4S] cluster: cysteine 1158, cysteine 1164, and cysteine 1169.

It belongs to the glutamate synthase family. In terms of assembly, monomer. The cofactor is [3Fe-4S] cluster. Requires FAD as cofactor. FMN serves as cofactor.

It is found in the plastid. It localises to the chloroplast stroma. The catalysed reaction is 2 oxidized [2Fe-2S]-[ferredoxin] + 2 L-glutamate = L-glutamine + 2 reduced [2Fe-2S]-[ferredoxin] + 2-oxoglutarate + 2 H(+). Its pathway is amino-acid biosynthesis; L-glutamate biosynthesis via GLT pathway; L-glutamate from 2-oxoglutarate and L-glutamine (ferredoxin route): step 1/1. It functions in the pathway energy metabolism; nitrogen metabolism. The polypeptide is Ferredoxin-dependent glutamate synthase (gltB) (Antithamnion sp. (Red alga)).